A 365-amino-acid chain; its full sequence is Deoxyguanosinetriphosphate triphosphohydrolase-like protein (365 aa).

The 136-residue stretch at 52–187 (RLTHSIEVSQ…VDHADEIAYV (136 aa)) folds into the HD domain.

The protein belongs to the dGTPase family. Type 2 subfamily.

This is Deoxyguanosinetriphosphate triphosphohydrolase-like protein from Wolinella succinogenes (strain ATCC 29543 / DSM 1740 / CCUG 13145 / JCM 31913 / LMG 7466 / NCTC 11488 / FDC 602W) (Vibrio succinogenes).